A 302-amino-acid polypeptide reads, in one-letter code: Putative S-adenosyl-L-methionine-dependent methyltransferase MUL_2961 (302 aa).

S-adenosyl-L-methionine contacts are provided by residues aspartate 128 and aspartate 157 to leucine 158.

Belongs to the UPF0677 family.

In terms of biological role, exhibits S-adenosyl-L-methionine-dependent methyltransferase activity. The chain is Putative S-adenosyl-L-methionine-dependent methyltransferase MUL_2961 from Mycobacterium ulcerans (strain Agy99).